Consider the following 155-residue polypeptide: MAEPATDTILVLNGPNLNMLGTREPEKYGHATLADVEALCRETAASFGLKADCRQSNREGELIDFIHEAHARKMKGIIINAGGYSHTSIALHDALLAVQIPTVEVHVTNIHARESFRHHSYTARAAFASLCGFGIEGYRLAIQGLAAKLGLKPKA.

The active-site Proton acceptor is tyrosine 28. Positions 80, 86, and 93 each coordinate substrate. Histidine 106 serves as the catalytic Proton donor. Substrate is bound by residues 107–108 (VT) and arginine 117.

The protein belongs to the type-II 3-dehydroquinase family. Homododecamer.

It carries out the reaction 3-dehydroquinate = 3-dehydroshikimate + H2O. Its pathway is metabolic intermediate biosynthesis; chorismate biosynthesis; chorismate from D-erythrose 4-phosphate and phosphoenolpyruvate: step 3/7. Its function is as follows. Catalyzes a trans-dehydration via an enolate intermediate. In Bradyrhizobium diazoefficiens (strain JCM 10833 / BCRC 13528 / IAM 13628 / NBRC 14792 / USDA 110), this protein is 3-dehydroquinate dehydratase 1 (aroQ1).